Reading from the N-terminus, the 584-residue chain is Cationic amino acid transporter 7, chloroplastic (584 aa).

Residues 1–49 (MEAQYRNHDGDTSFSSLRVYLNSLSDTPSRFSRRAVSVSTSYDEMSRVR) constitute a chloroplast transit peptide. 14 consecutive transmembrane segments (helical) span residues 62-82 (WYDLIGLGIGGMIGAGVFVTT), 90-110 (AGPSIVVSYAIAGLCALLSAF), 131-151 (ITFGEFPAFITGANLIMDYVL), 185-205 (GFNEIDPIAVIVVLAVTFVIC), 214-234 (VNMVLTALHIAFIVFVIVMGF), 254-274 (FFPFGVSGVFNGAAMVYLSYI), 293-313 (IPMGISGSVAIVIVLYCLMAI), 346-366 (VVGIGASFGILTSLIVAMLGQ), 396-416 (ASAFLGIFTAVLALFTDLNVL), 417-437 (LNLVSIGTLFVFYMVANAVIF), 449-469 (WPTLSFLCLFSITSILFTLVW), 480-500 (FILGASTVTAIAIVQIFHCVV), 508-528 (FWGVPLMPWTPCVSIFLNIFL), and 540-560 (FGFFSGLVVLVYVFYSVHASY).

This sequence belongs to the amino acid-polyamine-organocation (APC) superfamily. Cationic amino acid transporter (CAT) (TC 2.A.3.3) family.

It localises to the plastid. It is found in the chloroplast membrane. Functionally, permease involved in the transport of the cationic amino acids. This is Cationic amino acid transporter 7, chloroplastic (CAT7) from Arabidopsis thaliana (Mouse-ear cress).